The chain runs to 232 residues: Ribonuclease 3 (232 aa).

Positions 5–134 constitute an RNase III domain; sequence QTVLKNHFAI…FLGALLLDKD (130 aa). Glu47 provides a ligand contact to Mg(2+). Asp51 is an active-site residue. Mg(2+) is bound by residues Asp120 and Glu123. Glu123 is a catalytic residue. Residues 160-229 form the DRBM domain; the sequence is DYKTHLQELL…AKNAVEKGLD (70 aa).

The protein belongs to the ribonuclease III family. Homodimer. Mg(2+) serves as cofactor.

The protein resides in the cytoplasm. The enzyme catalyses Endonucleolytic cleavage to 5'-phosphomonoester.. Functionally, digests double-stranded RNA. Involved in the processing of primary rRNA transcript to yield the immediate precursors to the large and small rRNAs (23S and 16S). Processes some mRNAs, and tRNAs when they are encoded in the rRNA operon. Processes pre-crRNA and tracrRNA of type II CRISPR loci if present in the organism. The polypeptide is Ribonuclease 3 (Streptococcus pneumoniae serotype 4 (strain ATCC BAA-334 / TIGR4)).